Consider the following 383-residue polypeptide: Na(+)/H(+) antiporter NhaA (383 aa).

11 helical membrane-spanning segments follow: residues 10-30, 56-76, 91-111, 121-141, 150-170, 174-194, 206-226, 254-274, 289-308, 327-347, and 355-375; these read LIGG…NNSP, LMHW…GLEI, IITP…IYLS, GWAI…ALLG, LLVI…IAIF, SLSL…IICN, VVLG…ATLA, PWII…ISFS, IIWG…LAVF, GISL…VLAF, and AIKI…YIVL.

This sequence belongs to the NhaA Na(+)/H(+) (TC 2.A.33) antiporter family.

It localises to the cell inner membrane. The catalysed reaction is Na(+)(in) + 2 H(+)(out) = Na(+)(out) + 2 H(+)(in). Na(+)/H(+) antiporter that extrudes sodium in exchange for external protons. The sequence is that of Na(+)/H(+) antiporter NhaA from Francisella tularensis subsp. tularensis (strain SCHU S4 / Schu 4).